We begin with the raw amino-acid sequence, 267 residues long: NLP effector protein 6 (267 aa).

The N-terminal stretch at 1 to 35 (MRTTSPYSHCSHVEMNAGAFVTMLLVALSVCVAAA) is a signal peptide. Asn-114 carries an N-linked (GlcNAc...) asparagine glycan. The short motif at 117–127 (AIMYAWYFPKR) is the Conserved undecapeptide motif element. The Conserved heptapeptide motif motif lies at 134 to 140 (IQRHDWK). Asn-192 carries N-linked (GlcNAc...) asparagine glycosylation.

It belongs to the Necrosis inducing protein (NPP1) family.

Its subcellular location is the secreted. Its function is as follows. Probable secreted effector that may act as a pathogen-associated molecular pattern (PAMP) recognized by the plant immune system. This chain is NLP effector protein 6, found in Plasmopara viticola (Downy mildew of grapevine).